Here is a 134-residue protein sequence, read N- to C-terminus: Small ribosomal subunit protein uS8c (134 aa).

It belongs to the universal ribosomal protein uS8 family. As to quaternary structure, part of the 30S ribosomal subunit.

Its subcellular location is the plastid. The protein localises to the chloroplast. Its function is as follows. One of the primary rRNA binding proteins, it binds directly to 16S rRNA central domain where it helps coordinate assembly of the platform of the 30S subunit. This chain is Small ribosomal subunit protein uS8c (rps8), found in Cucumis sativus (Cucumber).